A 1603-amino-acid polypeptide reads, in one-letter code: Vitellogenin-3 (1603 aa).

Positions 1 to 15 are cleaved as a signal peptide; it reads MKSIIIASLVALAIA. In terms of domain architecture, Vitellogenin spans 24-685; the sequence is FSPKSEYVYK…EKNAFLPKEV (662 aa). A glycan (N-linked (GlcNAc...) asparagine) is linked at N1266. The VWFD domain occupies 1306-1475; the sequence is ATCKVGQSEV…SYLLKNEECE (170 aa). 2 disulfide bridges follow: C1308–C1438 and C1330–C1474.

In terms of tissue distribution, expressed in the intestine of adult hermaphrodites.

Its subcellular location is the secreted. Functionally, precursor of the egg-yolk proteins that are sources of nutrients during embryonic development. Together with other vitellogenins, may play a role in modulating life-span, acting via induction of autophagy and lysosomal lipolysis. The protein is Vitellogenin-3 (vit-3) of Caenorhabditis elegans.